A 595-amino-acid chain; its full sequence is Chaperone protein HscA homolog (595 aa).

The protein belongs to the heat shock protein 70 family.

In terms of biological role, chaperone involved in the maturation of iron-sulfur cluster-containing proteins. Has a low intrinsic ATPase activity which is markedly stimulated by HscB. The protein is Chaperone protein HscA homolog of Rickettsia rickettsii (strain Iowa).